The sequence spans 145 residues: Probable flagellum biosynthesis repressor protein FlbT (145 aa).

This sequence belongs to the FlbT family.

Functionally, has a post-transcriptional repressor function in flagellum biogenesis. Associates with the 5'-UTR of fljK mRNA and promotes its degradation. This Chelativorans sp. (strain BNC1) protein is Probable flagellum biosynthesis repressor protein FlbT.